Reading from the N-terminus, the 380-residue chain is Cytochrome b (380 aa).

Helical transmembrane passes span 34-54 (FGSL…LLAA), 78-99 (WLIR…YLHI), 114-134 (WNTG…GYVL), and 179-199 (FFTL…IHLT). The heme b site is built by His-84 and His-98. Positions 183 and 197 each coordinate heme b. Residue His-202 participates in a ubiquinone binding. A run of 4 helical transmembrane segments spans residues 227 to 247 (LKDI…ALFS), 289 to 309 (LGGV…PLLH), 321 to 341 (FSQL…WVGS), and 348 to 368 (FIII…ILFP).

This sequence belongs to the cytochrome b family. The cytochrome bc1 complex contains 11 subunits: 3 respiratory subunits (MT-CYB, CYC1 and UQCRFS1), 2 core proteins (UQCRC1 and UQCRC2) and 6 low-molecular weight proteins (UQCRH/QCR6, UQCRB/QCR7, UQCRQ/QCR8, UQCR10/QCR9, UQCR11/QCR10 and a cleavage product of UQCRFS1). This cytochrome bc1 complex then forms a dimer. It depends on heme b as a cofactor.

The protein resides in the mitochondrion inner membrane. Component of the ubiquinol-cytochrome c reductase complex (complex III or cytochrome b-c1 complex) that is part of the mitochondrial respiratory chain. The b-c1 complex mediates electron transfer from ubiquinol to cytochrome c. Contributes to the generation of a proton gradient across the mitochondrial membrane that is then used for ATP synthesis. The sequence is that of Cytochrome b (MT-CYB) from Antigone antigone (Sarus crane).